Consider the following 281-residue polypeptide: MEAPQNVGIKRRLKRFFRRDGRALIFAMDHGFEHGPTDFEPVWEHVNPRVIIRKVVRAGIDGVMMLPGLARIAGDEVKPEVGLMIKLTSKTNLRPKPEQLLQSQLGFVDDAIKLGADAIAATVYWGSPQEDVMMRQFAEIVSYAHDLGYPVVQFAYPRGPYIDEKYGKKEDYRVVMYGARAAAESGADMIKTYWTGSKETFAKVVEAAAGVPVLLSGGAKTENPVDFLKVVWEVIEAGGAGAVVGRNIFQRENPEPMIKALIRVIHRNEDPEEAAKAEGLI.

The active-site Schiff-base intermediate with dihydroxyacetone-P is the lysine 191.

The protein belongs to the DeoC/FbaB aldolase family. As to quaternary structure, homooctamer.

It localises to the cytoplasm. The catalysed reaction is beta-D-fructose 1,6-bisphosphate = D-glyceraldehyde 3-phosphate + dihydroxyacetone phosphate. Activated by citrate. This Pyrococcus furiosus (strain ATCC 43587 / DSM 3638 / JCM 8422 / Vc1) protein is Fructose-bisphosphate aldolase class 1 (fba).